The following is a 429-amino-acid chain: Adenylosuccinate synthetase (429 aa).

GTP is bound by residues 12–18 (GDEGKGK) and 40–42 (GHT). Aspartate 13 acts as the Proton acceptor in catalysis. Positions 13 and 40 each coordinate Mg(2+). Residues 13–16 (DEGK), 38–41 (NAGH), threonine 129, arginine 143, glutamine 223, threonine 238, and arginine 302 each bind IMP. Residue histidine 41 is the Proton donor of the active site. 298–304 (VVTGRKR) is a binding site for substrate. GTP-binding positions include arginine 304, 330–332 (KLD), and 412–414 (STS).

The protein belongs to the adenylosuccinate synthetase family. As to quaternary structure, homodimer. Mg(2+) serves as cofactor.

It is found in the cytoplasm. The enzyme catalyses IMP + L-aspartate + GTP = N(6)-(1,2-dicarboxyethyl)-AMP + GDP + phosphate + 2 H(+). It functions in the pathway purine metabolism; AMP biosynthesis via de novo pathway; AMP from IMP: step 1/2. In terms of biological role, plays an important role in the de novo pathway of purine nucleotide biosynthesis. Catalyzes the first committed step in the biosynthesis of AMP from IMP. This is Adenylosuccinate synthetase from Bartonella bacilliformis (strain ATCC 35685 / KC583 / Herrer 020/F12,63).